Reading from the N-terminus, the 99-residue chain is U8-agatoxin-Ao1a (99 aa).

The N-terminal stretch at 1-19 is a signal peptide; that stretch reads MKSLLFVTIAVYFVAQAVT. The propeptide occupies 20 to 45; that stretch reads ANLLSNFLGSSLIDDDKGNMHKLYKR.

The protein belongs to the neurotoxin 02 (plectoxin) family. In terms of processing, contains 5 disulfide bonds. As to expression, expressed by the venom gland.

It is found in the secreted. This is U8-agatoxin-Ao1a from Agelena orientalis (Funnel-web spider).